A 187-amino-acid chain; its full sequence is NADH-quinone oxidoreductase subunit B (187 aa).

Cys46, Cys47, Cys112, and Cys141 together coordinate [4Fe-4S] cluster.

This sequence belongs to the complex I 20 kDa subunit family. NDH-1 is composed of 14 different subunits. Subunits NuoB, C, D, E, F, and G constitute the peripheral sector of the complex. It depends on [4Fe-4S] cluster as a cofactor.

Its subcellular location is the cell inner membrane. It carries out the reaction a quinone + NADH + 5 H(+)(in) = a quinol + NAD(+) + 4 H(+)(out). NDH-1 shuttles electrons from NADH, via FMN and iron-sulfur (Fe-S) centers, to quinones in the respiratory chain. The immediate electron acceptor for the enzyme in this species is believed to be ubiquinone. Couples the redox reaction to proton translocation (for every two electrons transferred, four hydrogen ions are translocated across the cytoplasmic membrane), and thus conserves the redox energy in a proton gradient. This is NADH-quinone oxidoreductase subunit B from Myxococcus xanthus (strain DK1622).